The primary structure comprises 130 residues: MMRQSLQAVLPEISGNKTSLLRKSVCSDILTLFNSPHSALPSLLVSGMPEWQVHNQSDKHLQSWYCRQLRSALLFHEPRIAALQVNFKEAYCHTLAISLEIMLYHDGEPLTFDLVWDNGGWCSAMLENVS.

Belongs to the GpW/Gp25 family. IraD subfamily. In terms of assembly, interacts with RssB.

It is found in the cytoplasm. Inhibits RpoS proteolysis by regulating RssB activity, thereby increasing the stability of the sigma stress factor RpoS during oxidative stress. Its effect on RpoS stability is due to its interaction with RssB, which probably blocks the interaction of RssB with RpoS, and the consequent delivery of the RssB-RpoS complex to the ClpXP protein degradation pathway. The sequence is that of Anti-adapter protein IraD from Escherichia coli O9:H4 (strain HS).